The primary structure comprises 299 residues: GTPase Era (299 aa).

The region spanning 4–171 (KSGFVAILGR…VDILSENLDE (168 aa)) is the Era-type G domain. Residues 12–19 (GRPNVGKS) are G1. 12-19 (GRPNVGKS) contributes to the GTP binding site. The segment at 38–42 (XTTRN) is G2. The segment at 59 to 62 (DTPG) is G3. GTP contacts are provided by residues 59–63 (DTPGI) and 121–124 (NKID). The segment at 121–124 (NKID) is G4. The G5 stretch occupies residues 150-152 (ISA). The KH type-2 domain occupies 202–280 (TREEIPHSVA…FLETWVKVKK (79 aa)).

The protein belongs to the TRAFAC class TrmE-Era-EngA-EngB-Septin-like GTPase superfamily. Era GTPase family. In terms of assembly, monomer.

It localises to the cytoplasm. The protein localises to the cell membrane. Functionally, an essential GTPase that binds both GDP and GTP, with rapid nucleotide exchange. Plays a role in 16S rRNA processing and 30S ribosomal subunit biogenesis and possibly also in cell cycle regulation and energy metabolism. The chain is GTPase Era from Streptococcus pneumoniae serotype 19F (strain G54).